The primary structure comprises 128 residues: Protein Wnt-8 (128 aa).

Residue Ser1 is the site of O-palmitoleoyl serine attachment. 2 cysteine pairs are disulfide-bonded: Cys69–Cys109 and Cys85–Cys102. Residue Asn72 is glycosylated (N-linked (GlcNAc...) asparagine).

Belongs to the Wnt family. Palmitoleoylation is required for efficient binding to frizzled receptors. Depalmitoleoylation leads to Wnt signaling pathway inhibition. Post-translationally, proteolytic processing by tiki1 and tiki2 promotes oxidation and formation of large disulfide-bond oligomers, leading to inactivation of wnt8.

The protein localises to the secreted. The protein resides in the extracellular space. It is found in the extracellular matrix. Its function is as follows. Ligand for members of the frizzled family of seven transmembrane receptors. Probable developmental protein. May be a signaling molecule which affects the development of discrete regions of tissues. Is likely to signal over only few cell diameters. This Evasterias troschelii (Mottled sea star) protein is Protein Wnt-8 (WNT-8).